A 431-amino-acid polypeptide reads, in one-letter code: Serine hydroxymethyltransferase (431 aa).

Residues Leu-126 and 130-132 (GHL) each bind (6S)-5,6,7,8-tetrahydrofolate. Position 235 is an N6-(pyridoxal phosphate)lysine (Lys-235).

This sequence belongs to the SHMT family. Homodimer. Requires pyridoxal 5'-phosphate as cofactor.

It is found in the cytoplasm. It carries out the reaction (6R)-5,10-methylene-5,6,7,8-tetrahydrofolate + glycine + H2O = (6S)-5,6,7,8-tetrahydrofolate + L-serine. Its pathway is one-carbon metabolism; tetrahydrofolate interconversion. It participates in amino-acid biosynthesis; glycine biosynthesis; glycine from L-serine: step 1/1. Functionally, catalyzes the reversible interconversion of serine and glycine with tetrahydrofolate (THF) serving as the one-carbon carrier. This reaction serves as the major source of one-carbon groups required for the biosynthesis of purines, thymidylate, methionine, and other important biomolecules. Also exhibits THF-independent aldolase activity toward beta-hydroxyamino acids, producing glycine and aldehydes, via a retro-aldol mechanism. The chain is Serine hydroxymethyltransferase from Nocardia farcinica (strain IFM 10152).